The primary structure comprises 161 residues: HMG1/2-like protein (161 aa).

Disordered stretches follow at residues 1 to 46 (MKGA…KRAP), 60 to 91 (FKQK…EKAP), and 113 to 161 (GESA…DDDE). 2 stretches are compositionally biased toward basic and acidic residues: residues 10-27 (AKAD…EKPA) and 77-89 (AGER…ESEK). The segment at residues 42–111 (PKRAPSAFFV…EYNKAIAAYN (70 aa)) is a DNA-binding region (HMG box). Over residues 114 to 123 (ESAAAAAPKK) the composition is skewed to low complexity. The segment covering 145 to 161 (NDDDDDEGSDEDEDDDE) has biased composition (acidic residues).

Belongs to the HMGB family.

It is found in the nucleus. This Triticum aestivum (Wheat) protein is HMG1/2-like protein.